The primary structure comprises 317 residues: Ribosomal protein L11 methyltransferase (317 aa).

S-adenosyl-L-methionine-binding residues include T158, G179, D201, and N244.

Belongs to the methyltransferase superfamily. PrmA family.

Its subcellular location is the cytoplasm. It catalyses the reaction L-lysyl-[protein] + 3 S-adenosyl-L-methionine = N(6),N(6),N(6)-trimethyl-L-lysyl-[protein] + 3 S-adenosyl-L-homocysteine + 3 H(+). Methylates ribosomal protein L11. This Streptococcus pyogenes serotype M49 (strain NZ131) protein is Ribosomal protein L11 methyltransferase.